A 288-amino-acid chain; its full sequence is Glandicoline B O-methyltransferase roqN (288 aa).

Residues T57, D82, and 109–110 (DA) each bind S-adenosyl-L-methionine.

It belongs to the class I-like SAM-binding methyltransferase superfamily.

The catalysed reaction is glandicoline B + S-adenosyl-L-methionine = meleagrin + S-adenosyl-L-homocysteine + H(+). Its pathway is alkaloid biosynthesis. Functionally, glandicoline B O-methyltransferase; part of the gene cluster that mediates the biosynthesis of the mycotoxin meleagrin. The first stage is catalyzed by the dipeptide synthase roqA which condenses histidine and tryptophan to produce histidyltryptophanyldiketopiperazine (HTD). HTD is then converted to roquefortine C through two possible pathways. In the first pathway, prenyltransferase roqD transforms HTD to the intermediate roquefortine D, which is in turn converted to roquefortine C by the cytochrome P450 monooxygenase roqR. In the second pathway, HTD is first converted to the intermediate dehydrohistidyltryptophanyldi-ketopiperazine (DHTD) by roqR which is then prenylated by roqD to form roquefortine C. Roquefortine C can be further transformed to meleagrin via three more reactions including oxydation to glandicolin A by roqM, which is further reduced to glandicoline B by roqO. Finally, glandicoline B is converted to meleagrin by the glandicoline B O-methyltransferase roqN. More studies identified further branching and additional metabolites produced by the roquefortine/meleagrin cluster, including roquefortine F, roquefortine L, roquefortine M, roquefortine N and neoxaline. This Penicillium rubens (strain ATCC 28089 / DSM 1075 / NRRL 1951 / Wisconsin 54-1255) (Penicillium chrysogenum) protein is Glandicoline B O-methyltransferase roqN.